The primary structure comprises 56 residues: Large ribosomal subunit protein bL32 (56 aa).

Over residues 1-16 the composition is skewed to basic residues; the sequence is MAVQKSKKSRSMRGMR. Residues 1–22 form a disordered region; the sequence is MAVQKSKKSRSMRGMRRSHDAL.

Belongs to the bacterial ribosomal protein bL32 family.

This Aliivibrio salmonicida (strain LFI1238) (Vibrio salmonicida (strain LFI1238)) protein is Large ribosomal subunit protein bL32.